Consider the following 235-residue polypeptide: Aspartate/glutamate leucyltransferase (235 aa).

Belongs to the R-transferase family. Bpt subfamily.

It is found in the cytoplasm. The catalysed reaction is N-terminal L-glutamyl-[protein] + L-leucyl-tRNA(Leu) = N-terminal L-leucyl-L-glutamyl-[protein] + tRNA(Leu) + H(+). The enzyme catalyses N-terminal L-aspartyl-[protein] + L-leucyl-tRNA(Leu) = N-terminal L-leucyl-L-aspartyl-[protein] + tRNA(Leu) + H(+). In terms of biological role, functions in the N-end rule pathway of protein degradation where it conjugates Leu from its aminoacyl-tRNA to the N-termini of proteins containing an N-terminal aspartate or glutamate. In Pseudomonas putida (strain ATCC 700007 / DSM 6899 / JCM 31910 / BCRC 17059 / LMG 24140 / F1), this protein is Aspartate/glutamate leucyltransferase.